The primary structure comprises 214 residues: High frequency lysogenization protein HflD homolog (214 aa).

Belongs to the HflD family.

Its subcellular location is the cytoplasm. It localises to the cell inner membrane. The chain is High frequency lysogenization protein HflD homolog from Chromohalobacter salexigens (strain ATCC BAA-138 / DSM 3043 / CIP 106854 / NCIMB 13768 / 1H11).